Consider the following 912-residue polypeptide: MPGPSPGLRALLGFWVALGLGILRLSAVAQEPFWADLQPRVALVERGGSLWLNCSTNCPRPERGGLETSLRRNGPEGLRWRARQLVDIREPETQPVCFFRCAATLQARGLIRTFQRPDRVELVPLPPWQPVGENFTLSCRVPGAGPRGSLTLTLLRGAQELIRRSFAGEPARARGAVLTATVLARREDHGANFSCRAELDLRPQGLALFENSSAPRQLWTYALPLDSPRLLAPRVLEVDSQSLVSCTLDGLFPASEAGVHLALGDKRLNPEVTLEGDAIVATATATAEEEGIKQLVCAVTLGGERRESRENVTVYSFPAPLLTLSEPSAPEGKLVTVTCTAGARALVTLEGVPAAAPGQPAQLQFNASESDDGRSFFCDATLELDGETLSKNGSAELRVLYAPRLDDADCPRSWTWPEGPEQTLRCEARGNPTPAVHCARSDGGAVLALGLLGPVTRALAGTYRCTAANVQGEAVKDVTLTVEYAPALDSVGCPERVTWLEGTEASLSCVAHGVPPPSVSCVRFRQADVIEGLLLVAREHAGTYRCEAINARALAKNVAVTVEYGPSFEERSCPSNWTWVEGSEQLFSCEVEGKPQPSVQCVGSEGASEGLLLPLAPLNPSPSDPSVPRDLAPGIYVCNATNPLGSAVKTVVVSAESPPQMDDSTCPSDQTWLEGAEAAGPACARGRPSPRVRCSREGAPRPARPRVSREDAGTYLCVATNAHGSDSRTVTVGVEYRPVVAELAASPSGGVRPGGNFTLTCRAEAWPPAQISWRAPPGAPNIGLSSNNSTLSVPGAMGSHGGEYECEATNAHGHARRITVRVAGPWLWIAVGGAVGGAVLLAAGAGLAFYVQSTACKKGEYNVQEAESSGEAVCLNGAGGGAGSGAEGGPEAEDSAESPAGGEVFAIQLTSA.

Residues 1-29 (MPGPSPGLRALLGFWVALGLGILRLSAVA) form the signal peptide. Residues 30 to 826 (QEPFWADLQP…RITVRVAGPW (797 aa)) lie on the Extracellular side of the membrane. Ig-like C2-type domains follow at residues 47–127 (GGSL…PLPP), 132–232 (GENF…RLLA), 239–324 (DSQS…LLTL), 332–395 (GKLV…NGSA), 403–481 (PRLD…VTLT), 486–561 (PALD…VAVT), 566–645 (PSFE…NPLG), 659–734 (PQMD…TVGV), and 738–819 (PVVA…RRIT). Asn53 carries N-linked (GlcNAc...) (high mannose) asparagine glycosylation. 2 disulfides stabilise this stretch: Cys54/Cys97 and Cys58/Cys101. N-linked (GlcNAc...) asparagine glycosylation is present at Asn134. Residues Cys139 and Cys195 are joined by a disulfide bond. Phosphothreonine is present on residues Thr179 and Thr181. Residues Asn192 and Asn211 are each glycosylated (N-linked (GlcNAc...) asparagine). A disulfide bridge connects residues Cys246 and Cys297. Asn311, Asn366, and Asn392 each carry an N-linked (GlcNAc...) asparagine glycan. An intrachain disulfide couples Cys339 to Cys378. Intrachain disulfides connect Cys410/Cys465, Cys493/Cys546, and Cys573/Cys638. Asn576 and Asn639 each carry an N-linked (GlcNAc...) asparagine glycan. Cysteines 666 and 717 form a disulfide. The disordered stretch occupies residues 678–708 (AAGPACARGRPSPRVRCSREGAPRPARPRVS). Residues Asn756, Asn787, and Asn788 are each glycosylated (N-linked (GlcNAc...) asparagine). A disulfide bridge links Cys761 with Cys806. Residues 827–847 (LWIAVGGAVGGAVLLAAGAGL) traverse the membrane as a helical segment. Residues 848 to 912 (AFYVQSTACK…EVFAIQLTSA (65 aa)) lie on the Cytoplasmic side of the membrane. Positions 880-902 (GGAGSGAEGGPEAEDSAESPAGG) are disordered.

The protein belongs to the immunoglobulin superfamily. ICAM family. Glycosylation at Asn-53 is critical for functional folding. As to expression, expressed on neurons in the most rostral segment of the mammalian brain, the telencephalon.

Its subcellular location is the membrane. Its function is as follows. ICAM proteins are ligands for the leukocyte adhesion protein LFA-1 (integrin alpha-L/beta-2). The chain is Intercellular adhesion molecule 5 (ICAM5) from Oryctolagus cuniculus (Rabbit).